Consider the following 129-residue polypeptide: Small ribosomal subunit protein uS11c (129 aa).

Belongs to the universal ribosomal protein uS11 family. In terms of assembly, part of the 30S ribosomal subunit.

The protein resides in the plastid. It localises to the chloroplast. The protein is Small ribosomal subunit protein uS11c of Euglena gracilis.